A 400-amino-acid chain; its full sequence is CCA-adding enzyme (400 aa).

Residues Gly28 and Arg31 each coordinate ATP. Residues Gly28 and Arg31 each coordinate CTP. 2 residues coordinate Mg(2+): Asp41 and Asp43. The ATP site is built by Arg112, Asp155, Arg158, Arg161, and Arg164. Residues Arg112, Asp155, Arg158, Arg161, and Arg164 each coordinate CTP.

Belongs to the tRNA nucleotidyltransferase/poly(A) polymerase family. Bacterial CCA-adding enzyme type 3 subfamily. As to quaternary structure, homodimer. Mg(2+) serves as cofactor.

It catalyses the reaction a tRNA precursor + 2 CTP + ATP = a tRNA with a 3' CCA end + 3 diphosphate. The catalysed reaction is a tRNA with a 3' CCA end + 2 CTP + ATP = a tRNA with a 3' CCACCA end + 3 diphosphate. Its function is as follows. Catalyzes the addition and repair of the essential 3'-terminal CCA sequence in tRNAs without using a nucleic acid template. Adds these three nucleotides in the order of C, C, and A to the tRNA nucleotide-73, using CTP and ATP as substrates and producing inorganic pyrophosphate. tRNA 3'-terminal CCA addition is required both for tRNA processing and repair. Also involved in tRNA surveillance by mediating tandem CCA addition to generate a CCACCA at the 3' terminus of unstable tRNAs. While stable tRNAs receive only 3'-terminal CCA, unstable tRNAs are marked with CCACCA and rapidly degraded. In Staphylococcus aureus (strain COL), this protein is CCA-adding enzyme.